The primary structure comprises 89 residues: Small ribosomal subunit protein uS15 (89 aa).

It belongs to the universal ribosomal protein uS15 family. Part of the 30S ribosomal subunit. Forms a bridge to the 50S subunit in the 70S ribosome, contacting the 23S rRNA.

One of the primary rRNA binding proteins, it binds directly to 16S rRNA where it helps nucleate assembly of the platform of the 30S subunit by binding and bridging several RNA helices of the 16S rRNA. Its function is as follows. Forms an intersubunit bridge (bridge B4) with the 23S rRNA of the 50S subunit in the ribosome. The chain is Small ribosomal subunit protein uS15 from Exiguobacterium sp. (strain ATCC BAA-1283 / AT1b).